Consider the following 127-residue polypeptide: Holo-[acyl-carrier-protein] synthase (127 aa).

Residues Asp9 and Glu58 each contribute to the Mg(2+) site.

It belongs to the P-Pant transferase superfamily. AcpS family. It depends on Mg(2+) as a cofactor.

It localises to the cytoplasm. The catalysed reaction is apo-[ACP] + CoA = holo-[ACP] + adenosine 3',5'-bisphosphate + H(+). Transfers the 4'-phosphopantetheine moiety from coenzyme A to a Ser of acyl-carrier-protein. This is Holo-[acyl-carrier-protein] synthase from Shewanella sp. (strain W3-18-1).